The following is a 226-amino-acid chain: ADP-ribosylation factor-like protein 6-interacting protein 6 (226 aa).

Residues 1 to 49 form a disordered region; that stretch reads MSFVESWRFAGARRRRQVTPGPATRPGYSDYTQGDSWGEGEGDEDEGCD. 2 positions are modified to phosphoserine: S2 and S36. The span at 38-48 shows a compositional bias: acidic residues; it reads GEGEGDEDEGC. Phosphoserine occurs at positions 60, 65, and 80. 3 consecutive transmembrane segments (helical) span residues 111 to 131, 150 to 170, and 205 to 225; these read ILCS…AYMI, LLGF…CCSF, and MGYS…AWCL.

This sequence belongs to the ARL6IP6 family.

The protein localises to the nucleus inner membrane. This Mus musculus (Mouse) protein is ADP-ribosylation factor-like protein 6-interacting protein 6 (Arl6ip6).